A 67-amino-acid chain; its full sequence is MRMFRITACLPSPSKIRTQRELQNTFFTKLVPYDAWFREQQRIQKLGGKIIKVELATGRPNTNTGLL.

The region spanning 1–56 is the CpcD-like domain; sequence MRMFRITACLPSPSKIRTQRELQNTFFTKLVPYDAWFREQQRIQKLGGKIIKVELA.

This sequence belongs to the phycobilisome linker protein family.

The protein resides in the cellular thylakoid membrane. In terms of biological role, rod linker protein, associated with allophycocyanin. Linker polypeptides determine the state of aggregation and the location of the disk-shaped phycobiliprotein units within the phycobilisome and modulate their spectroscopic properties in order to mediate a directed and optimal energy transfer. This chain is Phycobilisome 7.8 kDa linker polypeptide, allophycocyanin-associated, core (apcC), found in Synechococcus sp. (strain ATCC 27144 / PCC 6301 / SAUG 1402/1) (Anacystis nidulans).